We begin with the raw amino-acid sequence, 460 residues long: Bifunctional protein GlmU (460 aa).

Residues methionine 1–lysine 229 are pyrophosphorylase. Residues leucine 9–glycine 12, lysine 23, glutamine 74, glycine 79–threonine 80, tyrosine 101–aspartate 103, glycine 138, glutamate 154, asparagine 169, and asparagine 227 each bind UDP-N-acetyl-alpha-D-glucosamine. Aspartate 103 provides a ligand contact to Mg(2+). Asparagine 227 lines the Mg(2+) pocket. Positions valine 230–glutamine 250 are linker. Positions glycine 251–asparagine 460 are N-acetyltransferase. UDP-N-acetyl-alpha-D-glucosamine-binding residues include arginine 333 and lysine 351. Histidine 363 (proton acceptor) is an active-site residue. Residues tyrosine 366 and asparagine 377 each coordinate UDP-N-acetyl-alpha-D-glucosamine. Acetyl-CoA contacts are provided by residues alanine 380, asparagine 386–tyrosine 387, serine 405, alanine 423, and arginine 440.

It in the N-terminal section; belongs to the N-acetylglucosamine-1-phosphate uridyltransferase family. In the C-terminal section; belongs to the transferase hexapeptide repeat family. As to quaternary structure, homotrimer. Mg(2+) is required as a cofactor.

The protein resides in the cytoplasm. It catalyses the reaction alpha-D-glucosamine 1-phosphate + acetyl-CoA = N-acetyl-alpha-D-glucosamine 1-phosphate + CoA + H(+). The catalysed reaction is N-acetyl-alpha-D-glucosamine 1-phosphate + UTP + H(+) = UDP-N-acetyl-alpha-D-glucosamine + diphosphate. Its pathway is nucleotide-sugar biosynthesis; UDP-N-acetyl-alpha-D-glucosamine biosynthesis; N-acetyl-alpha-D-glucosamine 1-phosphate from alpha-D-glucosamine 6-phosphate (route II): step 2/2. It functions in the pathway nucleotide-sugar biosynthesis; UDP-N-acetyl-alpha-D-glucosamine biosynthesis; UDP-N-acetyl-alpha-D-glucosamine from N-acetyl-alpha-D-glucosamine 1-phosphate: step 1/1. The protein operates within bacterial outer membrane biogenesis; LPS lipid A biosynthesis. Its function is as follows. Catalyzes the last two sequential reactions in the de novo biosynthetic pathway for UDP-N-acetylglucosamine (UDP-GlcNAc). The C-terminal domain catalyzes the transfer of acetyl group from acetyl coenzyme A to glucosamine-1-phosphate (GlcN-1-P) to produce N-acetylglucosamine-1-phosphate (GlcNAc-1-P), which is converted into UDP-GlcNAc by the transfer of uridine 5-monophosphate (from uridine 5-triphosphate), a reaction catalyzed by the N-terminal domain. The chain is Bifunctional protein GlmU from Nitrosospira multiformis (strain ATCC 25196 / NCIMB 11849 / C 71).